Here is a 652-residue protein sequence, read N- to C-terminus: MTGELPRGRRWSARTTWASRLNVPLRAFLHTETGSARVLLAAAVVALAWANLDESSYESLWGNTLSVQLGGWQLSHDLRYWVNSGLMTFFFLVIGLEVRRDFDLGELRERRRLTLPLLAGIGGILVPIAIYLAFNAGRPTAVGWGVVMATDTALALGMLAVLGPRFSDRLRNFLLTVAVVDDLIVIAVLAIAYPEHPSPTALFVAAGIFALVLLIRAAGGRWGPGYLLLGVAAWLAVSESGVDPVVVGLVMGLLTYAYAPARTELQRAADRFRLFREQPSPQLARSVRAGLSAALSPNDRLQHIYHPWASYLIVPLFALANVGVVVDGELLARAATSPVTLGVLFAYVVGKPAGIVIASMLVARLSHNRFRAPVGWAAIIGVGTVSGIGFTIALLIATHALHGPALDEAKIGILVATVGASLTTWLVFRLAARLPPARRARALLGVSEGIIDLMVPVDPDRDHVRGPREAPVTVVEYGDFECPYCGQAEPAVRELLTDFTNIRYVWRHLPLTDVHPYAQVAAEAAEAAGDQGAFWEMHDLLLAHQGELRPADLLGYAERLDLDLDRFREHLADRRGAVRIAEDVDGADLSSVSGTPTFFVNGRRHHGSYNIEALSAAVTSAFAGTRLRPRDDREPDRRREVGSEQPDEEPGT.

Residues Met1–Val427 form a na(+)/H(+) antiporter NhaA region. A run of 11 helical transmembrane segments spans residues Ala27–Leu47, Leu78–Val98, Thr114–Phe134, Val142–Leu162, Phe173–Tyr193, Thr200–Gly220, Leu227–Val247, Leu312–Ala332, Val343–Ala363, Trp376–Ile396, and Ile411–Ala431. Residues Phe428 to Ala623 form the Thioredoxin domain. The disordered stretch occupies residues Arg626 to Thr652. Positions Arg628–Gly642 are enriched in basic and acidic residues.

The protein in the N-terminal section; belongs to the NhaA Na(+)/H(+) (TC 2.A.33) antiporter family.

It localises to the cell membrane. It carries out the reaction Na(+)(in) + 2 H(+)(out) = Na(+)(out) + 2 H(+)(in). In terms of biological role, na(+)/H(+) antiporter that extrudes sodium in exchange for external protons. The polypeptide is Na(+)/H(+) antiporter NhaA 1 (Salinispora arenicola (strain CNS-205)).